We begin with the raw amino-acid sequence, 123 residues long: Protein Wnt-7 (123 aa).

Serine 1 carries O-palmitoleoyl serine; by PORCN lipidation. A disulfide bridge connects residues cysteine 89 and cysteine 104. A glycan (N-linked (GlcNAc...) asparagine) is linked at asparagine 90.

Belongs to the Wnt family. Post-translationally, palmitoleoylation is required for efficient binding to frizzled receptors. Depalmitoleoylation leads to Wnt signaling pathway inhibition.

It is found in the secreted. It localises to the extracellular space. Its subcellular location is the extracellular matrix. Functionally, ligand for members of the frizzled family of seven transmembrane receptors. Probable developmental protein. May be a signaling molecule which affects the development of discrete regions of tissues. Is likely to signal over only few cell diameters. This chain is Protein Wnt-7 (WNT-7), found in Evasterias troschelii (Mottled sea star).